The sequence spans 510 residues: Inositol-3-phosphate synthase (510 aa).

Positions 70, 71, 72, 73, 143, 180, 190, 193, 230, 231, 232, 233, 281, 282, 306, 309, 340, 341, 342, 355, 393, 394, 422, and 423 each coordinate NAD(+).

It belongs to the myo-inositol 1-phosphate synthase family. It depends on NAD(+) as a cofactor.

It is found in the cytoplasm. The protein resides in the cytosol. It localises to the nucleus. The enzyme catalyses D-glucose 6-phosphate = 1D-myo-inositol 3-phosphate. It participates in polyol metabolism; myo-inositol biosynthesis; myo-inositol from D-glucose 6-phosphate: step 1/2. Its function is as follows. Key enzyme in myo-inositol biosynthesis pathway that catalyzes the conversion of glucose 6-phosphate to 1-myo-inositol 1-phosphate in a NAD-dependent manner. This Hordeum vulgare (Barley) protein is Inositol-3-phosphate synthase.